A 503-amino-acid chain; its full sequence is Probable Xaa-Pro aminopeptidase TSTA_094700 (503 aa).

Residues Asp-277, Asp-288, Glu-428, and Glu-467 each coordinate Mn(2+).

It belongs to the peptidase M24B family. Mn(2+) serves as cofactor.

It catalyses the reaction Release of any N-terminal amino acid, including proline, that is linked to proline, even from a dipeptide or tripeptide.. Its function is as follows. Catalyzes the removal of a penultimate prolyl residue from the N-termini of peptides. This Talaromyces stipitatus (strain ATCC 10500 / CBS 375.48 / QM 6759 / NRRL 1006) (Penicillium stipitatum) protein is Probable Xaa-Pro aminopeptidase TSTA_094700.